The sequence spans 160 residues: Phosphopantetheine adenylyltransferase (160 aa).

Ser9 provides a ligand contact to substrate. ATP contacts are provided by residues 9-10 and His17; that span reads SF. Substrate is bound by residues Lys41, Val73, and Lys87. ATP-binding positions include 88–90, Glu98, and 122–128; these read GLR and YSFVSSS.

Belongs to the bacterial CoaD family. In terms of assembly, homohexamer. Mg(2+) is required as a cofactor.

It is found in the cytoplasm. The catalysed reaction is (R)-4'-phosphopantetheine + ATP + H(+) = 3'-dephospho-CoA + diphosphate. The protein operates within cofactor biosynthesis; coenzyme A biosynthesis; CoA from (R)-pantothenate: step 4/5. In terms of biological role, reversibly transfers an adenylyl group from ATP to 4'-phosphopantetheine, yielding dephospho-CoA (dPCoA) and pyrophosphate. This chain is Phosphopantetheine adenylyltransferase, found in Mycobacterium leprae (strain TN).